Reading from the N-terminus, the 483-residue chain is Malonate-semialdehyde dehydrogenase 2 (483 aa).

Positions 152, 176, 179, 180, and 229 each coordinate NAD(+). Cysteine 284 functions as the Nucleophile in the catalytic mechanism. Residue glutamate 384 participates in NAD(+) binding.

It belongs to the aldehyde dehydrogenase family. IolA subfamily. As to quaternary structure, homotetramer.

It carries out the reaction 3-oxopropanoate + NAD(+) + CoA + H2O = hydrogencarbonate + acetyl-CoA + NADH + H(+). The enzyme catalyses 2-methyl-3-oxopropanoate + NAD(+) + CoA + H2O = propanoyl-CoA + hydrogencarbonate + NADH + H(+). It participates in polyol metabolism; myo-inositol degradation into acetyl-CoA; acetyl-CoA from myo-inositol: step 7/7. Functionally, catalyzes the oxidation of malonate semialdehyde (MSA) and methylmalonate semialdehyde (MMSA) into acetyl-CoA and propanoyl-CoA, respectively. Is involved in a myo-inositol catabolic pathway. Bicarbonate, and not CO2, is the end-product of the enzymatic reaction. This Bacillus mycoides (strain KBAB4) (Bacillus weihenstephanensis) protein is Malonate-semialdehyde dehydrogenase 2.